The chain runs to 264 residues: ATP synthase subunit a (264 aa).

Transmembrane regions (helical) follow at residues Thr-29 to Phe-49, Ile-90 to Ile-110, Asp-134 to Ile-154, Ile-177 to Leu-197, Leu-208 to Val-228, and Leu-235 to Val-255.

Belongs to the ATPase A chain family. F-type ATPases have 2 components, CF(1) - the catalytic core - and CF(0) - the membrane proton channel. CF(1) has five subunits: alpha(3), beta(3), gamma(1), delta(1), epsilon(1). CF(0) has three main subunits: a(1), b(2) and c(9-12). The alpha and beta chains form an alternating ring which encloses part of the gamma chain. CF(1) is attached to CF(0) by a central stalk formed by the gamma and epsilon chains, while a peripheral stalk is formed by the delta and b chains.

It is found in the cell inner membrane. In terms of biological role, key component of the proton channel; it plays a direct role in the translocation of protons across the membrane. The protein is ATP synthase subunit a of Shewanella oneidensis (strain ATCC 700550 / JCM 31522 / CIP 106686 / LMG 19005 / NCIMB 14063 / MR-1).